The following is a 365-amino-acid chain: Phosphate acyltransferase (365 aa).

This sequence belongs to the PlsX family. As to quaternary structure, homodimer. Probably interacts with PlsY.

The protein resides in the cytoplasm. It catalyses the reaction a fatty acyl-[ACP] + phosphate = an acyl phosphate + holo-[ACP]. It participates in lipid metabolism; phospholipid metabolism. Its function is as follows. Catalyzes the reversible formation of acyl-phosphate (acyl-PO(4)) from acyl-[acyl-carrier-protein] (acyl-ACP). This enzyme utilizes acyl-ACP as fatty acyl donor, but not acyl-CoA. This chain is Phosphate acyltransferase, found in Picosynechococcus sp. (strain ATCC 27264 / PCC 7002 / PR-6) (Agmenellum quadruplicatum).